Consider the following 63-residue polypeptide: Large ribosomal subunit protein uL29 (63 aa).

This sequence belongs to the universal ribosomal protein uL29 family.

The protein is Large ribosomal subunit protein uL29 of Histophilus somni (strain 129Pt) (Haemophilus somnus).